The following is a 141-amino-acid chain: Large ribosomal subunit protein uL11 (141 aa).

The protein belongs to the universal ribosomal protein uL11 family. In terms of assembly, part of the ribosomal stalk of the 50S ribosomal subunit. Interacts with L10 and the large rRNA to form the base of the stalk. L10 forms an elongated spine to which L12 dimers bind in a sequential fashion forming a multimeric L10(L12)X complex. In terms of processing, one or more lysine residues are methylated.

Forms part of the ribosomal stalk which helps the ribosome interact with GTP-bound translation factors. This is Large ribosomal subunit protein uL11 from Aster yellows witches'-broom phytoplasma (strain AYWB).